Here is a 135-residue protein sequence, read N- to C-terminus: C-type lectin Cal (135 aa).

4 disulfides stabilise this stretch: Cys3–Cys14, Cys31–Cys131, Cys38–Cys133, and Cys106–Cys123. Residues 10-132 (MNGLCYKIFN…CESKDAFLCQ (123 aa)) enclose the C-type lectin domain. 5 residues coordinate Ca(2+): Gln96, Asp98, Glu104, Asn119, and Asp120. The short motif at 96–98 (QPD) is the Galactose-binding element.

The protein belongs to the true venom lectin family. Homodecamer of disulfide-linked dimers arranged in two pseudo-5-fold symmetric pentamers. Expressed by the venom gland.

The protein resides in the secreted. In terms of biological role, galactose-binding protein which recognizes specific carbohydrate structures and agglutinates a variety of animal cells by binding to cell-surface glycoproteins and glycolipids. Calcium-dependent lectin. Shows high hemagglutinating activity (MHC=10 ng/ml). This chain is C-type lectin Cal, found in Crotalus atrox (Western diamondback rattlesnake).